The following is a 131-amino-acid chain: Large ribosomal subunit protein bL17 (131 aa).

It belongs to the bacterial ribosomal protein bL17 family. Part of the 50S ribosomal subunit. Contacts protein L32.

This is Large ribosomal subunit protein bL17 from Cupriavidus necator (strain ATCC 17699 / DSM 428 / KCTC 22496 / NCIMB 10442 / H16 / Stanier 337) (Ralstonia eutropha).